Reading from the N-terminus, the 288-residue chain is Light-independent protochlorophyllide reductase iron-sulfur ATP-binding protein (288 aa).

Residues 12–17 and lysine 41 each bind ATP; that span reads GIGKST. Mg(2+) is bound at residue serine 16. [4Fe-4S] cluster-binding residues include cysteine 97 and cysteine 131. 182–183 serves as a coordination point for ATP; the sequence is NR.

The protein belongs to the NifH/BchL/ChlL family. As to quaternary structure, homodimer. Protochlorophyllide reductase is composed of three subunits; ChlL, ChlN and ChlB. Requires [4Fe-4S] cluster as cofactor.

The catalysed reaction is chlorophyllide a + oxidized 2[4Fe-4S]-[ferredoxin] + 2 ADP + 2 phosphate = protochlorophyllide a + reduced 2[4Fe-4S]-[ferredoxin] + 2 ATP + 2 H2O. The protein operates within porphyrin-containing compound metabolism; chlorophyll biosynthesis (light-independent). Functionally, component of the dark-operative protochlorophyllide reductase (DPOR) that uses Mg-ATP and reduced ferredoxin to reduce ring D of protochlorophyllide (Pchlide) to form chlorophyllide a (Chlide). This reaction is light-independent. The L component serves as a unique electron donor to the NB-component of the complex, and binds Mg-ATP. The sequence is that of Light-independent protochlorophyllide reductase iron-sulfur ATP-binding protein from Synechocystis sp. (strain ATCC 27184 / PCC 6803 / Kazusa).